Here is a 770-residue protein sequence, read N- to C-terminus: Low-density lipoprotein receptor-related protein 3 (770 aa).

A signal peptide spans 1 to 36 (MEKRAAAGPEGAPGARAPLAVVCLVNLFLTGRLSSA). The Extracellular portion of the chain corresponds to 37 to 496 (VPALAACSGK…HGCLAAVPRK (460 aa)). 9 disulfide bridges follow: Cys43–Cys72, Cys99–Cys120, Cys166–Cys178, Cys173–Cys191, Cys185–Cys200, Cys212–Cys227, Cys219–Cys240, Cys234–Cys249, and Cys254–Cys282. A CUB 1 domain is found at 43-159 (CSGKLEQHTE…QGFRLSYIRG (117 aa)). Asn71 is a glycosylation site (N-linked (GlcNAc...) asparagine). 2 LDL-receptor class A domains span residues 165-201 (SCQT…GNCS) and 211-250 (LCPG…AGCP). A glycan (N-linked (GlcNAc...) asparagine) is linked at Asn199. One can recognise a CUB 2 domain in the interval 254 to 365 (CGRRLGSFYG…HGFNATYQVK (112 aa)). Residue Asn359 is glycosylated (N-linked (GlcNAc...) asparagine). 2 LDL-receptor class A domains span residues 415 to 453 (ACPP…KNCF) and 454 to 490 (SCQP…HGCL). 6 cysteine pairs are disulfide-bonded: Cys416-Cys430, Cys423-Cys443, Cys437-Cys452, Cys455-Cys467, Cys462-Cys480, and Cys474-Cys489. The chain crosses the membrane as a helical span at residues 497–517 (VITAALIGSLVCGLLLVIALG). Over 518-770 (CAFKLYSLRT…ASDDEALLVC (253 aa)) the chain is Cytoplasmic. The interval 639–753 (LLQAAPGPVP…PLGVCRSPPP (115 aa)) is disordered. Over residues 689–703 (RDPEYRPEDKERKAC) the composition is skewed to basic and acidic residues.

The protein belongs to the LDLR family. In terms of assembly, binds GGA1 and GGA2.

The protein localises to the membrane. The protein resides in the coated pit. Its function is as follows. Probable receptor, which may be involved in the internalization of lipophilic molecules and/or signal transduction. Its precise role is however unclear, since it does not bind to very low density lipoprotein (VLDL) or to LRPAP1 in vitro. This is Low-density lipoprotein receptor-related protein 3 (Lrp3) from Rattus norvegicus (Rat).